The sequence spans 266 residues: Large ribosomal subunit protein uL2m (266 aa).

Belongs to the universal ribosomal protein uL2 family.

It localises to the mitochondrion. The protein is Large ribosomal subunit protein uL2m (mrpl2) of Dictyostelium discoideum (Social amoeba).